Reading from the N-terminus, the 341-residue chain is Phosphate acyltransferase (341 aa).

The protein belongs to the PlsX family. Homodimer. Probably interacts with PlsY.

Its subcellular location is the cytoplasm. It carries out the reaction a fatty acyl-[ACP] + phosphate = an acyl phosphate + holo-[ACP]. Its pathway is lipid metabolism; phospholipid metabolism. Its function is as follows. Catalyzes the reversible formation of acyl-phosphate (acyl-PO(4)) from acyl-[acyl-carrier-protein] (acyl-ACP). This enzyme utilizes acyl-ACP as fatty acyl donor, but not acyl-CoA. This is Phosphate acyltransferase from Lacticaseibacillus casei (strain BL23) (Lactobacillus casei).